Consider the following 370-residue polypeptide: Dual-specificity RNA methyltransferase RlmN (370 aa).

Glu-93 acts as the Proton acceptor in catalysis. Residues 99 to 331 form the Radical SAM core domain; that stretch reads DRKRGTLCVS…TRVRRTRGDD (233 aa). A disulfide bridge connects residues Cys-106 and Cys-336. 3 residues coordinate [4Fe-4S] cluster: Cys-113, Cys-117, and Cys-120. Residues 162 to 163, Ser-194, 216 to 218, and Asn-293 contribute to the S-adenosyl-L-methionine site; these read GE and SLH. Catalysis depends on Cys-336, which acts as the S-methylcysteine intermediate.

Belongs to the radical SAM superfamily. RlmN family. It depends on [4Fe-4S] cluster as a cofactor.

It localises to the cytoplasm. It carries out the reaction adenosine(2503) in 23S rRNA + 2 reduced [2Fe-2S]-[ferredoxin] + 2 S-adenosyl-L-methionine = 2-methyladenosine(2503) in 23S rRNA + 5'-deoxyadenosine + L-methionine + 2 oxidized [2Fe-2S]-[ferredoxin] + S-adenosyl-L-homocysteine. The enzyme catalyses adenosine(37) in tRNA + 2 reduced [2Fe-2S]-[ferredoxin] + 2 S-adenosyl-L-methionine = 2-methyladenosine(37) in tRNA + 5'-deoxyadenosine + L-methionine + 2 oxidized [2Fe-2S]-[ferredoxin] + S-adenosyl-L-homocysteine. Specifically methylates position 2 of adenine 2503 in 23S rRNA and position 2 of adenine 37 in tRNAs. m2A2503 modification seems to play a crucial role in the proofreading step occurring at the peptidyl transferase center and thus would serve to optimize ribosomal fidelity. The polypeptide is Dual-specificity RNA methyltransferase RlmN (Coxiella burnetii (strain CbuK_Q154) (Coxiella burnetii (strain Q154))).